Consider the following 128-residue polypeptide: Probable prefoldin subunit 6 (128 aa).

Belongs to the prefoldin subunit beta family. Heterohexamer of two PFD-alpha type and four PFD-beta type subunits.

The protein localises to the cytoplasm. In terms of biological role, binds specifically to cytosolic chaperonin (c-CPN) and transfers target proteins to it. Binds to nascent polypeptide chain and promotes folding in an environment in which there are many competing pathways for nonnative proteins. Required for positioning of the mitotic spindle. This Caenorhabditis briggsae protein is Probable prefoldin subunit 6.